The following is a 142-amino-acid chain: Large ribosomal subunit protein uL11 (142 aa).

This sequence belongs to the universal ribosomal protein uL11 family. As to quaternary structure, part of the ribosomal stalk of the 50S ribosomal subunit. Interacts with L10 and the large rRNA to form the base of the stalk. L10 forms an elongated spine to which L12 dimers bind in a sequential fashion forming a multimeric L10(L12)X complex. In terms of processing, one or more lysine residues are methylated.

In terms of biological role, forms part of the ribosomal stalk which helps the ribosome interact with GTP-bound translation factors. This Mycolicibacterium gilvum (strain PYR-GCK) (Mycobacterium gilvum (strain PYR-GCK)) protein is Large ribosomal subunit protein uL11.